We begin with the raw amino-acid sequence, 120 residues long: Autophagy-related protein 8d (120 aa).

The Phosphatidylethanolamine amidated glycine moiety is linked to residue glycine 117. The propeptide at 118–120 (IFF) is removed in mature form.

It belongs to the ATG8 family. In terms of assembly, interacts with ATG4B. Interacts with NBR1. The C-terminal 3 residues are removed by ATG4 to expose Gly-117 at the C-terminus. This Gly-117 forms then a thioester bond with the 'Cys-558' of ATG7 (E1-like activating enzyme) before being transferred to the 'Cys-258' of ATG3 (the specific E2 conjugating enzyme), in order to be finally amidated with phosphatidylethanolamine. This lipid modification anchors ATG8 to autophagosomes. In terms of tissue distribution, constitutively expressed.

Its subcellular location is the cytoplasmic vesicle. The protein localises to the autophagosome membrane. It is found in the vacuole membrane. The protein resides in the cytoplasm. It localises to the cytoskeleton. In terms of biological role, ubiquitin-like modifier involved in autophagosomes formation. May mediate the delivery of the autophagosomes to the vacuole via the microtubule cytoskeleton. The chain is Autophagy-related protein 8d (ATG8D) from Arabidopsis thaliana (Mouse-ear cress).